A 367-amino-acid polypeptide reads, in one-letter code: Uroporphyrinogen decarboxylase (367 aa).

Substrate-binding positions include 27 to 31 (RQAGR), aspartate 77, tyrosine 157, threonine 212, and histidine 333.

This sequence belongs to the uroporphyrinogen decarboxylase family. Homodimer.

Its subcellular location is the cytoplasm. The enzyme catalyses uroporphyrinogen III + 4 H(+) = coproporphyrinogen III + 4 CO2. Its pathway is porphyrin-containing compound metabolism; protoporphyrin-IX biosynthesis; coproporphyrinogen-III from 5-aminolevulinate: step 4/4. In terms of biological role, catalyzes the decarboxylation of four acetate groups of uroporphyrinogen-III to yield coproporphyrinogen-III. The sequence is that of Uroporphyrinogen decarboxylase from Cupriavidus metallidurans (strain ATCC 43123 / DSM 2839 / NBRC 102507 / CH34) (Ralstonia metallidurans).